An 834-amino-acid polypeptide reads, in one-letter code: Enhancer of filamentation 1 (834 aa).

The region spanning 3-65 (ARNLMARALY…PGNRVKLLIG (63 aa)) is the SH3 domain. Phosphotyrosine is present on residues Tyr92, Tyr164, Tyr166, Tyr177, Tyr189, Tyr214, and Tyr223. Ser296 is subject to Phosphoserine. Phosphotyrosine is present on Tyr317. Disordered regions lie at residues 328–402 (PPAE…DKRL) and 584–624 (SQMP…SERS). Residues 332 to 344 (TSEKANPEERDGV) are compositionally biased toward basic and acidic residues. The short motif at 360-363 (DVVD) is the Caspase cleavage related site element. The span at 368 to 397 (LSFSSTGSTRSNMSTSSTTSKESSVSASPS) shows a compositional bias: low complexity. Ser369 carries the post-translational modification Phosphoserine. The interval 710-760 (FYYDQCETHYISLLNAIDALFSCVSSAQPPRIFVAHSKFVILSAHKLVFIG) is divergent helix-loop-helix motif. The interval 710 to 834 (FYYDQCETHY…KRSLLEMATF (125 aa)) is required for interaction with PLK1. The residue at position 780 (Ser780) is a Phosphoserine. Residue Thr804 is modified to Phosphothreonine.

It belongs to the CAS family. As to quaternary structure, homodimer. Forms heterodimers with BCAR1/p130cas. Forms complexes with PTK2B/RAFTK, adapter protein CRKL and LYN kinase. Part of a complex composed of NEDD9, AURKA and CTTN; within the complex NEDD9 acts as a scaffold protein and is required for complex formation. Part of a ternary complex composed of SMAD3, ITCH/AIP4 and NEDD9/HEF1; within the complex NEDD9/HEF1 interacts (via N-terminus) with ITCH/AIP4; the complex mediates ubiquitination and proteasomal degradation of NEDD9/HEF1. Interacts with ID2. Interacts with CTTN (via N-terminus). Interacts with MICAL. Interacts with TXNL4/DIM1. Interacts with BCAR3 (via Ras-GEF domain). Interacts with SH2D3C isoform 1 and isoform 2. Interacts with BCAR3. Interacts with ECT2. Interacts with PTPN11/SHP-2 (via SH2 domains); the interaction is enhanced when NEDD9/CAS-L is tyrosine phosphorylated. Interacts (via C-terminus) with PLK1 (via polo box domain). Interacts with NKX2-5. Interacts with SMAD3; the interaction is inhibited by oxidation of NEDD9. Interacts with ABL1; interaction is induced by CXCL12-mediated phosphorylation of NEDD/HEF1. Interacts (via SH3 domain) with PTK2/FAK. Interacts with FYN; in the presence of PTK2. Interacts with INPPL1/SHIP2. Post-translationally, polyubiquitinated by ITCH/AIP4, leading to proteasomal degradation. In terms of processing, PTK2/FAK1 phosphorylates the protein at the YDYVHL motif (conserved among all cas proteins) following integrin stimulation. The SRC family kinases (FYN, SRC, LCK and CRK) are recruited to the phosphorylated sites and can phosphorylate other tyrosine residues. Ligation of either integrin beta-1 or B-cell antigen receptor on tonsillar B-cells and B-cell lines promotes tyrosine phosphorylation and both integrin and BCR-mediated tyrosine phosphorylation requires an intact actin network. Phosphorylation is required to recruit NEDD9 to T-cell receptor microclusters at the periphery of newly formed immunological synapses. In fibroblasts transformation with oncogene v-ABL results in an increase in tyrosine phosphorylation. Transiently phosphorylated following CD3 cross-linking and this phosphorylated form binds to CRKL and C3G. A mutant lacking the SH3 domain is phosphorylated upon CD3 cross-linking but not upon integrin beta-1 cross-linking. Tyrosine phosphorylation occurs upon stimulation of the G-protein coupled C1a calcitonin receptor. Calcitonin-stimulated tyrosine phosphorylation is mediated by calcium- and protein kinase C-dependent mechanisms and requires the integrity of the actin cytoskeleton. Phosphorylation at Ser-369 induces proteasomal degradation. Phosphorylated by LYN. Phosphorylation at Ser-780 by CSNK1D or CSNK1E, or phosphorylation of Thr-804 by CSNK1E enhances the interaction of NEDD9 with PLK1.

It is found in the cytoplasm. The protein resides in the cell cortex. Its subcellular location is the nucleus. The protein localises to the golgi apparatus. It localises to the cell projection. It is found in the lamellipodium. The protein resides in the cell junction. Its subcellular location is the focal adhesion. The protein localises to the cytoskeleton. It localises to the spindle pole. It is found in the cilium. The protein resides in the cilium basal body. Its subcellular location is the basolateral cell membrane. Functionally, negatively regulates embryonic fibroblast migration. May play an important role in integrin beta-1 or B cell antigen receptor (BCR) mediated signaling in B- and T-cells. Integrin beta-1 stimulation leads to recruitment of various proteins including CRKl and SHPTP2 to the tyrosine phosphorylated form. Promotes adhesion and migration of lymphocytes; as a result required for the correct migration of lymphocytes to the spleen and other secondary lymphoid organs. Plays a role in the organization of T-cell F-actin cortical cytoskeleton and the centralization of T-cell receptor microclusters at the immunological synapse. Negatively regulates cilia outgrowth in polarized cysts. Modulates cilia disassembly via activation of AURKA-mediated phosphorylation of HDAC6 and subsequent deacetylation of alpha-tubulin. In conjunction with NKX2-5, positively regulates transcription of genes such as COL3A1 and MMP2, resulting in increased pulmonary endothelial fibrosis in response to hypoxia. Positively regulates RANKL-induced osteoclastogenesis. Required for the maintenance of hippocampal dendritic spines in the dentate gyrus and CA1 regions, thereby involved in spatial learning and memory. The protein is Enhancer of filamentation 1 of Canis lupus familiaris (Dog).